The primary structure comprises 393 residues: S-adenosylmethionine synthase (393 aa).

Residue His16 coordinates ATP. Asp18 is a binding site for Mg(2+). Position 44 (Glu44) interacts with K(+). Residues Glu57 and Gln100 each contribute to the L-methionine site. The segment at 100 to 110 is flexible loop; it reads QSPDIVMGVDG. ATP is bound by residues 165–167, 231–232, Asp240, 246–247, and Lys267; these read DAK, RF, and RK. Asp240 provides a ligand contact to L-methionine. L-methionine is bound at residue Lys271.

Belongs to the AdoMet synthase family. In terms of assembly, homotetramer; dimer of dimers. Requires Mg(2+) as cofactor. The cofactor is K(+).

The protein resides in the cytoplasm. It catalyses the reaction L-methionine + ATP + H2O = S-adenosyl-L-methionine + phosphate + diphosphate. It functions in the pathway amino-acid biosynthesis; S-adenosyl-L-methionine biosynthesis; S-adenosyl-L-methionine from L-methionine: step 1/1. In terms of biological role, catalyzes the formation of S-adenosylmethionine (AdoMet) from methionine and ATP. The overall synthetic reaction is composed of two sequential steps, AdoMet formation and the subsequent tripolyphosphate hydrolysis which occurs prior to release of AdoMet from the enzyme. The polypeptide is S-adenosylmethionine synthase (Coxiella burnetii (strain CbuG_Q212) (Coxiella burnetii (strain Q212))).